The following is a 575-amino-acid chain: Serine/threonine-protein kinase Pink1, mitochondrial (575 aa).

The transit peptide at 1–51 (MSLLAYTNLLLQNGRIFRYYKKANIKKFIKKIIKLDLKSTPSEASVSRQTF) directs the protein to the mitochondrion. Topologically, residues 52–94 (LSTGLNSVKNAVQLQARKLLINNVLERVTPTLNSDLKKKAAKR) are mitochondrial intermembrane. Residues 95–118 (LFYGDSAPFFALVGVSLASGSGLL) traverse the membrane as a helical segment. Topologically, residues 119-575 (TKDDELEGIC…KWIQELHIYN (457 aa)) are cytoplasmic. K193 lines the ATP pocket. Residues S202 and S204 each carry the phosphoserine; by autocatalysis modification. E214 contributes to the Mg(2+) binding site. T305 carries the post-translational modification Phosphothreonine; by autocatalysis. D334 (proton acceptor) is an active-site residue. Residues N339 and D357 each contribute to the Mg(2+) site.

It belongs to the protein kinase superfamily. Ser/Thr protein kinase family. Mg(2+) is required as a cofactor. In terms of processing, proteolytically cleaved. In healthy cells, the precursor is continuously imported into mitochondria where it is proteolytically cleaved into its short form by the mitochondrial rhomboid protease rho-7 (8231301). The short form is then released into the cytosol where it rapidly undergoes proteasome-dependent degradation. In unhealthy cells, when cellular stress conditions lead to the loss of mitochondrial membrane potential, mitochondrial import is impaired leading to the precursor accumulating on the outer mitochondrial membrane (OMM). Post-translationally, autophosphorylated. Autophosphorylated on Ser-202, which activates kinase activity. Loss of mitochondrial membrane potential results in the precursor accumulating on the outer mitochondrial membrane (OMM) where it is activated by autophosphorylation at Ser-202. Autophosphorylation is sufficient and essential for selective recruitment of park to depolarized mitochondria, likely via Pink1-dependent phosphorylation of polyubiquitin chains. Also autophosphorylated at Ser-204 and Thr-305.

The protein localises to the mitochondrion outer membrane. It is found in the mitochondrion inner membrane. Its subcellular location is the cytoplasm. The protein resides in the cytosol. The enzyme catalyses L-seryl-[protein] + ATP = O-phospho-L-seryl-[protein] + ADP + H(+). The catalysed reaction is L-threonyl-[protein] + ATP = O-phospho-L-threonyl-[protein] + ADP + H(+). Acts as a serine/threonine-protein kinase. Exhibits a substrate preference for proline at position P+1 and a general preference at several residues for basic residues such as arginine. Also exhibits moderate preferences for a phosphotyrosine at position P-3 and a tryptophan at P-5. Critical to mitochondrial homeostasis it mediates several pathways that maintain mitochondrial health and function Protects against mitochondrial dysfunction during cellular stress by phosphorylating mitochondrial proteins such as park and likely Drp1, to coordinate mitochondrial quality control mechanisms that remove and replace dysfunctional mitochondrial components. Depending on the severity of mitochondrial damage and/or dysfunction, activity ranges from preventing apoptosis and stimulating mitochondrial biogenesis to regulating mitochondrial dynamics and eliminating severely damaged mitochondria via mitophagy. Appears to be particularly important in maintaining the physiology and function of cells with high energy demands that are undergoing stress or altered metabolic environment, including spermatids, muscle cells and neurons such as the dopaminergic (DA) neurons. Mediates the translocation and activation of park at the outer membrane (OMM) of dysfunctional/depolarized mitochondria. At the OMM of damaged mitochondria, phosphorylates pre-existing polyubiquitin chains, the Pink1-phosphorylated polyubiquitin then recruits park from the cytosol to the OMM where park is fully activated by phosphorylation at 'Ser-94' by Pink1. When cellular stress results in irreversible mitochondrial damage, functions with park to promote the clearance of dysfunctional and/or depolarized mitochondria by selective autophagy (mitophagy). The Pink1-park pathway also promotes fission and/or inhibits fusion of damaged mitochondria, by phosphorylating and thus promoting the park-dependent degradation of proteins involved in mitochondrial fusion/fission such as Marf, Opa1 and fzo. This prevents the refusion of unhealthy mitochondria with the mitochondrial network or initiates mitochondrial fragmentation facilitating their later engulfment by autophagosomes. Also likely to promote mitochondrial fission independently of park and Atg7-mediated mitophagy, via the phosphorylation and activation of Drp1. Regulates motility of damaged mitochondria by phosphorylating Miro which likely promotes its park-dependent degradation by the proteasome; in motor neurons, this inhibits mitochondrial intracellular anterograde transport along the axons which probably increases the chance of the mitochondria being eliminated in the soma. The Pink1-park pathway is also involved in mitochondrial regeneration processes such as promoting mitochondrial biogenesis, activating localized mitochondrial repair, promoting selective turnover of mitochondrial proteins and initiating the mitochondrial import of endogenous proteins. Involved in mitochondrial biogenesis by promoting the park-dependent ubiquitination of transcriptional repressor Paris which leads to its subsequent proteasomal degradation and allows activation of the transcription factor srl. Functions with park to promote localized mitochondrial repair by activating the translation of specific nuclear-encoded mitochondrial RNAs (nc-mtRNAs) on the mitochondrial surface, including several key electron transport chain component nc-mtRNAs. During oogenesis, phosphorylates and inactivates larp on the membrane of defective mitochondria, thus impairing local translation and mtDNA replication and consequently, reducing transmission of deleterious mtDNA mutations to the mature oocyte. Phosphorylates the mitochondrial acyl-CoA dehydrogenase Mcad, and appears to be important for maintaining fatty acid and amino acid metabolism via a mechanism that is independent of it's role in maintaining production of ATP. This chain is Serine/threonine-protein kinase Pink1, mitochondrial, found in Pediculus humanus subsp. corporis (Body louse).